We begin with the raw amino-acid sequence, 254 residues long: Ubiquinone/menaquinone biosynthesis C-methyltransferase UbiE (254 aa).

S-adenosyl-L-methionine contacts are provided by residues T77, D98, 126–127 (DA), and S143.

It belongs to the class I-like SAM-binding methyltransferase superfamily. MenG/UbiE family.

The enzyme catalyses a 2-demethylmenaquinol + S-adenosyl-L-methionine = a menaquinol + S-adenosyl-L-homocysteine + H(+). The catalysed reaction is a 2-methoxy-6-(all-trans-polyprenyl)benzene-1,4-diol + S-adenosyl-L-methionine = a 5-methoxy-2-methyl-3-(all-trans-polyprenyl)benzene-1,4-diol + S-adenosyl-L-homocysteine + H(+). It participates in quinol/quinone metabolism; menaquinone biosynthesis; menaquinol from 1,4-dihydroxy-2-naphthoate: step 2/2. Its pathway is cofactor biosynthesis; ubiquinone biosynthesis. Its function is as follows. Methyltransferase required for the conversion of demethylmenaquinol (DMKH2) to menaquinol (MKH2) and the conversion of 2-polyprenyl-6-methoxy-1,4-benzoquinol (DDMQH2) to 2-polyprenyl-3-methyl-6-methoxy-1,4-benzoquinol (DMQH2). The sequence is that of Ubiquinone/menaquinone biosynthesis C-methyltransferase UbiE from Blochmanniella pennsylvanica (strain BPEN).